The chain runs to 322 residues: Glutamyl-Q tRNA(Asp) synthetase (322 aa).

L-glutamate-binding positions include 28-32 and glutamate 64; that span reads RFAPS. Residues 31 to 41 carry the 'HIGH' region motif; it reads PSPSGDLHFGS. Positions 120, 122, 134, and 138 each coordinate Zn(2+). L-glutamate contacts are provided by tyrosine 191 and arginine 209. The 'KMSKS' region signature appears at 247-251; the sequence is KLSKQ. Residue lysine 250 coordinates ATP.

Belongs to the class-I aminoacyl-tRNA synthetase family. GluQ subfamily. Zn(2+) serves as cofactor.

Catalyzes the tRNA-independent activation of glutamate in presence of ATP and the subsequent transfer of glutamate onto a tRNA(Asp). Glutamate is transferred on the 2-amino-5-(4,5-dihydroxy-2-cyclopenten-1-yl) moiety of the queuosine in the wobble position of the QUC anticodon. This is Glutamyl-Q tRNA(Asp) synthetase from Pectobacterium atrosepticum (strain SCRI 1043 / ATCC BAA-672) (Erwinia carotovora subsp. atroseptica).